A 202-amino-acid chain; its full sequence is Orotate phosphoribosyltransferase (202 aa).

5-phospho-alpha-D-ribose 1-diphosphate contacts are provided by residues Lys93 and 113 to 121 (EDIITTGGS). Residues Thr117 and Arg145 each coordinate orotate.

It belongs to the purine/pyrimidine phosphoribosyltransferase family. PyrE subfamily. Homodimer. The cofactor is Mg(2+).

The enzyme catalyses orotidine 5'-phosphate + diphosphate = orotate + 5-phospho-alpha-D-ribose 1-diphosphate. The protein operates within pyrimidine metabolism; UMP biosynthesis via de novo pathway; UMP from orotate: step 1/2. In terms of biological role, catalyzes the transfer of a ribosyl phosphate group from 5-phosphoribose 1-diphosphate to orotate, leading to the formation of orotidine monophosphate (OMP). This Campylobacter jejuni subsp. doylei (strain ATCC BAA-1458 / RM4099 / 269.97) protein is Orotate phosphoribosyltransferase.